The chain runs to 229 residues: Platelet-activating factor acetylhydrolase IB subunit alpha2 (229 aa).

Residue S2 is modified to N-acetylserine. Residue S2 is modified to Phosphoserine. The active site involves S48. S64 carries the phosphoserine modification. Catalysis depends on residues D193 and H196. Residue T220 is modified to Phosphothreonine.

Belongs to the 'GDSL' lipolytic enzyme family. Platelet-activating factor acetylhydrolase IB beta/gamma subunits subfamily. Forms a catalytic dimer which is either homodimer (alpha2/alpha2 homodimer) or heterodimer with PAFAH1B3 (alpha2/alpha1 heterodimer). Component of the cytosolic (PAF-AH (I)) heterotetrameric enzyme, which is composed of PAFAH1B1 (beta), PAFAH1B2 (alpha2) and PAFAH1B3 (alpha1) subunits. The catalytic activity of the enzyme resides in the alpha1 (PAFAH1B3) and alpha2 (PAFAH1B2) subunits, whereas the beta subunit (PAFAH1B1) has regulatory activity. Trimer formation is not essential for the catalytic activity. Interacts (homodimer form) with PAFAH1B1 (homodimer form); PAFAH1B2 competes with NDEL1 for PAFAH1B1 binding. Interacts with VLDLR; this interaction may modulate the Reelin pathway.

It is found in the cytoplasm. It carries out the reaction a 1-O-alkyl-2-acetyl-sn-glycero-3-phosphocholine + H2O = a 1-O-alkyl-sn-glycero-3-phosphocholine + acetate + H(+). It catalyses the reaction 1-O-hexadecyl-2-acetyl-sn-glycero-3-phosphocholine + H2O = 1-O-hexadecyl-sn-glycero-3-phosphocholine + acetate + H(+). The enzyme catalyses 1-O-hexadecyl-2-acetyl-sn-glycero-3-phosphate + H2O = 1-O-hexadecyl-sn-glycero-3-phosphate + acetate + H(+). The catalysed reaction is 1-O-hexadecyl-2-acetyl-sn-glycero-3-phosphoethanolamine + H2O = 1-O-hexadecyl-sn-glycero-3-phosphoethanolamine + acetate + H(+). Its activity is regulated as follows. Beta subunit (PAFAH1B1) stimulates the acetylhydrolase activity of the alpha2/alpha2 catalytic homodimer. Its function is as follows. Alpha2 catalytic subunit of the cytosolic type I platelet-activating factor (PAF) acetylhydrolase (PAF-AH (I)) heterotetrameric enzyme that catalyzes the hydrolyze of the acetyl group at the sn-2 position of PAF and its analogs and modulates the action of PAF. The activity and substrate specificity of PAF-AH (I) are affected by its subunit composition. The alpha2/alpha2 homodimer (PAFAH1B2/PAFAH1B2 homodimer) hydrolyzes PAF and 1-O-alkyl-2-acetyl-sn-glycero-3-phosphorylethanolamine (AAGPE) more efficiently than 1-O-alkyl-2-acetyl-sn-glycero-3-phosphoric acid (AAGPA). In contrast, the alpha1/alpha2 heterodimer(PAFAH1B3/PAFAH1B3 heterodimer) hydrolyzes AAGPA more efficiently than PAF, but has little hydrolytic activity towards AAGPE. May play a role in male germ cell meiosis during the late pachytenestage and meiotic divisions as well as early spermiogenesis. This is Platelet-activating factor acetylhydrolase IB subunit alpha2 from Pongo abelii (Sumatran orangutan).